The following is a 492-amino-acid chain: Beta-Ala-His dipeptidase (492 aa).

H107 is a Zn(2+) binding site. D109 is an active-site residue. D140 is a binding site for Zn(2+). E174 (proton acceptor) is an active-site residue. Residue E175 participates in Zn(2+) binding. S194 is modified (phosphoserine). Residues D203 and H453 each contribute to the Zn(2+) site.

It belongs to the peptidase M20A family. In terms of assembly, homodimer. Zn(2+) serves as cofactor. Detected exclusively in kidney.

The protein resides in the secreted. The catalysed reaction is Preferential hydrolysis of the beta-Ala-|-His dipeptide (carnosine), and also anserine, Xaa-|-His dipeptides and other dipeptides including homocarnosine.. It catalyses the reaction carnosine + H2O = beta-alanine + L-histidine. The enzyme catalyses anserine + H2O = N(pros)-methyl-L-histidine + beta-alanine. It carries out the reaction L-alanyl-L-histidine + H2O = L-histidine + L-alanine. The catalysed reaction is glycyl-L-histidine + H2O = L-histidine + glycine. It catalyses the reaction L-homocarnosine + H2O = 4-aminobutanoate + L-histidine. Functionally, catalyzes the peptide bond hydrolysis in Xaa-His dipeptides, displaying the highest activity toward carnosine (beta-alanyl-L-histidine) and anserine (beta-alanyl-3-methyl-histidine). The chain is Beta-Ala-His dipeptidase (Cndp1) from Rattus norvegicus (Rat).